The chain runs to 408 residues: Hepatocyte nuclear factor 4-gamma (408 aa).

Positions 9–84 (NCLCAICGDR…AGMKKEAVQN (76 aa)) form a DNA-binding region, nuclear receptor. 2 NR C4-type zinc fingers span residues 12-32 (CAICGDRATGKHYGASSCDGC) and 48-72 (CRFSRQCVVDKDKRNQCRYCRLRKC). Phosphoserine is present on serine 94. The NR LBD domain maps to 99 to 328 (SNIPSINTLA…NLLQEMLLGG (230 aa)). Residues 368 to 390 (ISTPETPLPSPPQGSGQEQYKIA) form a disordered region. Residues threonine 370 and threonine 373 each carry the phosphothreonine modification. Serine 377 carries the phosphoserine modification.

It belongs to the nuclear hormone receptor family. NR2 subfamily. Expressed in pancreas, kidney, small intestine and testis. Weakly expressed in colon. Not expressed in liver, skeletal muscle, lung, placenta, brain, heart, peripheral blood, ovary, prostate, thymus and spleen.

The protein localises to the nucleus. In terms of biological role, transcription factor. Has a lower transcription activation potential than HNF4-alpha. This is Hepatocyte nuclear factor 4-gamma (HNF4G) from Homo sapiens (Human).